Reading from the N-terminus, the 748-residue chain is Catalase-peroxidase (748 aa).

Residues 91 to 236 (WHSAGTYRVG…LAAVQMGLIY (146 aa)) constitute a cross-link (tryptophyl-tyrosyl-methioninium (Trp-Tyr) (with M-262)). Catalysis depends on H92, which acts as the Proton acceptor. The disordered stretch occupies residues 201–223 (AQPVADKAGHGKEHGRTDGGRNL). Over residues 207-221 (KAGHGKEHGRTDGGR) the composition is skewed to basic and acidic residues. The tryptophyl-tyrosyl-methioninium (Tyr-Met) (with W-91) cross-link spans 236–262 (YVNPEGPDGNPDPQASAHDIRETFARM). H277 is a binding site for heme b.

This sequence belongs to the peroxidase family. Peroxidase/catalase subfamily. Homodimer or homotetramer. Requires heme b as cofactor. Formation of the three residue Trp-Tyr-Met cross-link is important for the catalase, but not the peroxidase activity of the enzyme.

The enzyme catalyses H2O2 + AH2 = A + 2 H2O. It carries out the reaction 2 H2O2 = O2 + 2 H2O. Functionally, bifunctional enzyme with both catalase and broad-spectrum peroxidase activity. This chain is Catalase-peroxidase, found in Bordetella avium (strain 197N).